An 82-amino-acid polypeptide reads, in one-letter code: Small ribosomal subunit protein bS16 (82 aa).

This sequence belongs to the bacterial ribosomal protein bS16 family.

In Alcanivorax borkumensis (strain ATCC 700651 / DSM 11573 / NCIMB 13689 / SK2), this protein is Small ribosomal subunit protein bS16.